The chain runs to 858 residues: DNA replication licensing factor mcm4-A (858 aa).

The disordered stretch occupies residues 1 to 125; it reads MSSPTSTPSR…ARKVKQVDLH (125 aa). 2 stretches are compositionally biased toward polar residues: residues 54–68 and 79–94; these read SPSG…SSPA and LDLS…SSRV. The C4-type zinc-finger motif lies at 301–326; the sequence is CQVCAFTTRVEIDRGRIAEPSVCKHC. Residues 453 to 662 enclose the MCM domain; that stretch reads IYERLAAALA…YDRRLAHHLV (210 aa). Residues Tyr-466, Arg-492, Lys-511, Ser-512, Asn-613, Arg-638, Arg-727, and Glu-730 each coordinate ATP. The Arginine finger signature appears at 637–640; sequence SRFD.

The protein belongs to the MCM family. As to quaternary structure, component of the mcm2-7 complex (RLF-M). The complex forms a toroidal hexameric ring with the proposed subunit order mcm2-mcm6-mcm4-mcm7-mcm3-mcm5. The heterodimer of mmcm3/mcm5 interacts with mcm4, mmcm6, mcm7 and weakly with mcm2. Component of the CMG helicase complex, composed of the mcm2-7 complex, the GINS complex and cdc45. Post-translationally, hyperphosphorylated during mitosis in a mechanism requiring cdc2-cyclin B and other kinases. Undergoes dephosphorylation after exiting mitosis, existing in a partially phosphorylated state in the cytosolic interphase mcm complex which associates with the pre-replication complexes (pre-Rcs). Complete dephosphorylation inactivates the mcm complex, preventing its binding to chromatin. Becomes actively phosphorylated during S phase once the mcm complex is assembled on the chromatin. This chromatin-associated phosphorylation occurs during the activation of the pre-Rcs and is independent of cdks. Phosphorylated by the cdc7-dbf4b complex.

It localises to the nucleus. It is found in the chromosome. It carries out the reaction ATP + H2O = ADP + phosphate + H(+). Functionally, acts as a component of the MCM2-7 complex (MCM complex) which is the replicative helicase essential for 'once per cell cycle' DNA replication initiation and elongation in eukaryotic cells. Core component of CDC45-MCM-GINS (CMG) helicase, the molecular machine that unwinds template DNA during replication, and around which the replisome is built. The active ATPase sites in the MCM2-7 ring are formed through the interaction surfaces of two neighboring subunits such that a critical structure of a conserved arginine finger motif is provided in trans relative to the ATP-binding site of the Walker A box of the adjacent subunit. The six ATPase active sites, however, are likely to contribute differentially to the complex helicase activity. In Xenopus laevis (African clawed frog), this protein is DNA replication licensing factor mcm4-A (mcm4-a).